The following is a 1197-amino-acid chain: DNA-directed RNA polymerase subunit beta (1197 aa).

Basic and acidic residues predominate over residues 1172–1185 (KEQEEKKAQQEAEK). Residues 1172–1197 (KEQEEKKAQQEAEKAQAASAEDPSAE) are disordered. The segment covering 1186–1197 (AQAASAEDPSAE) has biased composition (low complexity).

The protein belongs to the RNA polymerase beta chain family. In terms of assembly, the RNAP catalytic core consists of 2 alpha, 1 beta, 1 beta' and 1 omega subunit. When a sigma factor is associated with the core the holoenzyme is formed, which can initiate transcription.

It catalyses the reaction RNA(n) + a ribonucleoside 5'-triphosphate = RNA(n+1) + diphosphate. In terms of biological role, DNA-dependent RNA polymerase catalyzes the transcription of DNA into RNA using the four ribonucleoside triphosphates as substrates. In Latilactobacillus sakei subsp. sakei (strain 23K) (Lactobacillus sakei subsp. sakei), this protein is DNA-directed RNA polymerase subunit beta.